We begin with the raw amino-acid sequence, 204 residues long: MTEWEAATPAVAETPDIKLFGKWSTDDVQINDISLQDYIAVKEKYAKYLPHSAGRYAAKRFRKAQCPIVERLTNSMMMHGRNNGKKLMTVRIVKHAFEIIHLLTGENPLQVLVNAIINSGPREDSTRIGRAGTVRRQAVDVSPLRRVNQAIWLLCTGAREAAFRNIKTIAECLADELINAAKGSSNSYAIKKKDELERVAKSNR.

The residue at position 1 (Met1) is an N-acetylmethionine. Thr2 is modified (N-acetylthreonine; in 40S ribosomal protein S5, N-terminally processed). Thr14 bears the Phosphothreonine mark. At Lys47 the chain carries N6-acetyllysine; alternate. A Glycyl lysine isopeptide (Lys-Gly) (interchain with G-Cter in SUMO2); alternate cross-link involves residue Lys47. A Phosphoserine modification is found at Ser142.

It belongs to the universal ribosomal protein uS7 family. In terms of assembly, component of the small ribosomal subunit. Part of the small subunit (SSU) processome, composed of more than 70 proteins and the RNA chaperone small nucleolar RNA (snoRNA) U3.

The protein localises to the cytoplasm. The protein resides in the nucleus. It localises to the nucleolus. Component of the small ribosomal subunit. The ribosome is a large ribonucleoprotein complex responsible for the synthesis of proteins in the cell. Part of the small subunit (SSU) processome, first precursor of the small eukaryotic ribosomal subunit. During the assembly of the SSU processome in the nucleolus, many ribosome biogenesis factors, an RNA chaperone and ribosomal proteins associate with the nascent pre-rRNA and work in concert to generate RNA folding, modifications, rearrangements and cleavage as well as targeted degradation of pre-ribosomal RNA by the RNA exosome. The chain is Small ribosomal subunit protein uS7 (Rps5) from Mus musculus (Mouse).